The primary structure comprises 100 residues: Urease subunit gamma (100 aa).

This sequence belongs to the urease gamma subunit family. As to quaternary structure, heterotrimer of UreA (gamma), UreB (beta) and UreC (alpha) subunits. Three heterotrimers associate to form the active enzyme.

It localises to the cytoplasm. The enzyme catalyses urea + 2 H2O + H(+) = hydrogencarbonate + 2 NH4(+). The protein operates within nitrogen metabolism; urea degradation; CO(2) and NH(3) from urea (urease route): step 1/1. In Rhizobium etli (strain ATCC 51251 / DSM 11541 / JCM 21823 / NBRC 15573 / CFN 42), this protein is Urease subunit gamma.